The chain runs to 986 residues: Replication factor C subunit 1 (986 aa).

A disordered region spans residues 1-95; that stretch reads MQRGIDSFFK…ALSKLKRHVD (95 aa). 6 positions are modified to phosphoserine: S18, S28, S40, S41, S48, and S58. Position 60 is a phosphothreonine (T60). 2 positions are modified to phosphoserine: S62 and S63. Position 71 is a phosphothreonine (T71). Residues S128, S137, S149, S154, S156, S164, and S194 each carry the phosphoserine modification. A compositionally biased stretch (basic and acidic residues) spans 136-147; the sequence is ESIKEAAPEKKV. Disordered stretches follow at residues 136–203 and 317–388; these read ESIK…ERHE and KQVK…NDVP. T197 carries the phosphothreonine modification. In terms of domain architecture, BRCT spans 232–322; that stretch reads GSPDCLSGLT…SGIAKQVKEE (91 aa). Basic and acidic residues-rich tracts occupy residues 317-364 and 370-385; these read KQVK…EKHD and VKEE…DKLN. 487–494 provides a ligand contact to ATP; it reads GPPGIGKT. The disordered stretch occupies residues 913-986; sequence SEAAGADDDY…ASKSKAKAKK (74 aa). The span at 917–932 shows a compositional bias: acidic residues; the sequence is GADDDYLDEGPGEEDG. A phosphoserine mark is found at S938 and S939. Positions 955–959 match the Nuclear localization signal motif; that stretch reads KAKKR. A compositionally biased stretch (low complexity) spans 962 to 979; sequence TSKASGGSKKATSSTASK.

This sequence belongs to the activator 1 large subunit family. Interacts with C-terminus of PCNA.

The protein localises to the nucleus. Functionally, the elongation of primed DNA templates by DNA polymerase delta and epsilon requires the action of the accessory proteins proliferating cell nuclear antigen (PCNA) and activator 1. This subunit binds to the primer-template junction. This Drosophila melanogaster (Fruit fly) protein is Replication factor C subunit 1 (Gnf1).